A 623-amino-acid polypeptide reads, in one-letter code: Arginine decarboxylase 2 (623 aa).

Lys-109 is subject to N6-(pyridoxal phosphate)lysine. A substrate-binding site is contributed by 295–305 (LDCGGGLGVDY).

It belongs to the Orn/Lys/Arg decarboxylase class-II family. SpeA subfamily. It depends on pyridoxal 5'-phosphate as a cofactor. Mg(2+) serves as cofactor. As to expression, expressed in stems (at protein level).

It carries out the reaction L-arginine + H(+) = agmatine + CO2. It functions in the pathway amine and polyamine biosynthesis; agmatine biosynthesis; agmatine from L-arginine: step 1/1. In Oryza sativa subsp. japonica (Rice), this protein is Arginine decarboxylase 2 (ADC2).